The chain runs to 216 residues: Large ribosomal subunit protein uL3 (216 aa).

A disordered region spans residues 137-157 (GASHGAHKNHRKPGSIGGAST).

It belongs to the universal ribosomal protein uL3 family. As to quaternary structure, part of the 50S ribosomal subunit. Forms a cluster with proteins L14 and L19.

Functionally, one of the primary rRNA binding proteins, it binds directly near the 3'-end of the 23S rRNA, where it nucleates assembly of the 50S subunit. The polypeptide is Large ribosomal subunit protein uL3 (Paenarthrobacter aurescens (strain TC1)).